Here is a 363-residue protein sequence, read N- to C-terminus: Mitogen-activated protein kinase 12 (363 aa).

The region spanning 25 to 309 is the Protein kinase domain; it reads YKDLKQVGTG…AAEALAFPFF (285 aa). ATP contacts are provided by residues 31–39 and Lys-54; that span reads VGTGAYGTV. Asp-151 acts as the Proton acceptor in catalysis. Residue Thr-181 is modified to Phosphothreonine. A TXY motif is present at residues 181–183; that stretch reads TGY. Tyr-183 carries the post-translational modification Phosphotyrosine.

The protein belongs to the protein kinase superfamily. CMGC Ser/Thr protein kinase family. MAP kinase subfamily. It depends on Mg(2+) as a cofactor. Post-translationally, dually phosphorylated on Thr-181 and Tyr-183, which activates the enzyme.

It is found in the cytoplasm. The catalysed reaction is L-seryl-[protein] + ATP = O-phospho-L-seryl-[protein] + ADP + H(+). It catalyses the reaction L-threonyl-[protein] + ATP = O-phospho-L-threonyl-[protein] + ADP + H(+). With respect to regulation, activated by threonine and tyrosine phosphorylation. In terms of biological role, serine/threonine kinase which acts as an essential component of the MAP kinase signal transduction pathway. MAPK12 is one of the four p38 MAPKs which play an important role in the cascades of cellular responses evoked by extracellular stimuli such as pro-inflammatory cytokines or physical stress leading to direct activation of transcription factors. Accordingly, p38 MAPKs phosphorylate a broad range of proteins and it has been estimated that they may have approximately 200 to 300 substrates each. Some of the targets are downstream kinases such as MAPKAPK2, which are activated through phosphorylation and further phosphorylate additional targets. The protein is Mitogen-activated protein kinase 12 (mapk12) of Danio rerio (Zebrafish).